An 807-amino-acid chain; its full sequence is Serine/threonine-protein kinase B-raf (807 aa).

Low complexity-rich tracts occupy residues 1–15 and 110–128; these read MAAL…GASL and SVSS…SSSL. Disordered stretches follow at residues 1 to 36 and 104 to 128; these read MAAL…YAGS and GNGT…SSSL. The RBD domain occupies 155 to 227; sequence PIVRVFLPNK…TGEELHVEVL (73 aa). The Phorbol-ester/DAG-type zinc-finger motif lies at 234–280; it reads THNFVRKTFFTLAFCDFCRKLLFQGFRCQTCGYKFHQRCSTEVPLMC. Positions 235, 248, 251, 261, 264, 269, 272, and 280 each coordinate Zn(2+). A compositionally biased stretch (polar residues) spans 303–313; the sequence is EETTLGETTPA. 2 disordered regions span residues 303–372 and 434–494; these read EETT…VHIN and STAG…EIPD. Low complexity predominate over residues 314–328; it reads SGSYPSVPPSDSVGP. 2 stretches are compositionally biased toward basic and acidic residues: residues 348 to 363 and 463 to 487; these read PADE…RDRS and QRER…RDSS. A Protein kinase domain is found at 497–757; it reads ITVGQRIGSG…PQILASIELL (261 aa). ATP contacts are provided by residues 503 to 511 and Lys-523; that span reads IGSGSFGTV. Catalysis depends on Asp-616, which acts as the Proton acceptor. A Phosphoserine; by MAPK1 modification is found at Ser-790. Residue Thr-793 is modified to Phosphothreonine; by MAPK1.

Belongs to the protein kinase superfamily. TKL Ser/Thr protein kinase family. RAF subfamily. The cofactor is Zn(2+). Phosphorylated. In terms of tissue distribution, expressed preferentially in neural tissue.

It localises to the nucleus. The protein resides in the cytoplasm. The protein localises to the cell membrane. It carries out the reaction L-seryl-[protein] + ATP = O-phospho-L-seryl-[protein] + ADP + H(+). It catalyses the reaction L-threonyl-[protein] + ATP = O-phospho-L-threonyl-[protein] + ADP + H(+). In quiescent cells, maintained in an inactive state via an intramolecular interaction between the protein kinase and N-terminal domains. Following mitogen-mediated cell activation, binds via its RGB domain to active HRAS (GTP-bound) which releases the inhibitory intramolecular interaction between the two domains. This allows the MAP2K1-mediated dimerization of KSR1 or KSR2, and BRAF which activates BRAF. Protein kinase involved in the activation of the MAP signaling cascade. May play a role in transducing specific signals in neural cells. The sequence is that of Serine/threonine-protein kinase B-raf from Coturnix japonica (Japanese quail).